A 452-amino-acid chain; its full sequence is Na(+)/H(+) antiporter NhaA (452 aa).

11 helical membrane passes run 23 to 43 (MMLF…LSTI), 71 to 91 (LLQF…GLEI), 108 to 128 (LPIV…LLVV), 136 to 156 (GAAI…AVLG), 165 to 185 (VFLT…IALF), 189 to 209 (HINI…YLMG), 216 to 236 (LGLY…SGIH), 316 to 336 (IVGY…TLGG), 349 to 369 (VFLG…YGFV), 385 to 405 (LMAV…IATL), and 418 to 438 (EAKL…IVTL).

Belongs to the NhaA Na(+)/H(+) (TC 2.A.33) antiporter family.

It is found in the cell inner membrane. It carries out the reaction Na(+)(in) + 2 H(+)(out) = Na(+)(out) + 2 H(+)(in). Na(+)/H(+) antiporter that extrudes sodium in exchange for external protons. The protein is Na(+)/H(+) antiporter NhaA of Porphyromonas gingivalis (strain ATCC 33277 / DSM 20709 / CIP 103683 / JCM 12257 / NCTC 11834 / 2561).